The following is a 387-amino-acid chain: Exodeoxyribonuclease 7 large subunit (387 aa).

This sequence belongs to the XseA family. In terms of assembly, heterooligomer composed of large and small subunits.

Its subcellular location is the cytoplasm. It carries out the reaction Exonucleolytic cleavage in either 5'- to 3'- or 3'- to 5'-direction to yield nucleoside 5'-phosphates.. In terms of biological role, bidirectionally degrades single-stranded DNA into large acid-insoluble oligonucleotides, which are then degraded further into small acid-soluble oligonucleotides. The sequence is that of Exodeoxyribonuclease 7 large subunit from Campylobacter lari (strain RM2100 / D67 / ATCC BAA-1060).